A 338-amino-acid chain; its full sequence is MTIRIAINGFGRIGRSVLRALYESGRRAEITVVAINELASAEGMAHLLKYDSSHGRFSWDVRQECDQLYVGDDDIRLLHQVEIQQLPWRELSVDIVLDCSGVYGSREDGEAHLAAGAKKVLFSHPGTTDLDATVVFGVNHDRLESGHRIVSNASCTTNCIIPVIKLLDDAFGIENGTVTTIHSSMNDQPVIDAYHHDLRRTRAASQSIIPVDTKLSAGITRIFPQFVDRFEAISVRVPTINVTAIDLSVSVRKAVNVNEINALLQKSAHESFRGIVDYTELPLVSADFNHDPHSAIVDGTQTRVSGQHLIKTLVWCDNEWGFANRMLDTTRAMAACGF.

Position 12–13 (12–13 (RI)) interacts with NAD(+). Substrate contacts are provided by residues 154-156 (SCT), arginine 200, 213-214 (TK), and arginine 236. Cysteine 155 (nucleophile) is an active-site residue. Asparagine 318 is an NAD(+) binding site.

The protein belongs to the glyceraldehyde-3-phosphate dehydrogenase family. Epd subfamily. As to quaternary structure, homotetramer.

It is found in the cytoplasm. The enzyme catalyses D-erythrose 4-phosphate + NAD(+) + H2O = 4-phospho-D-erythronate + NADH + 2 H(+). It functions in the pathway cofactor biosynthesis; pyridoxine 5'-phosphate biosynthesis; pyridoxine 5'-phosphate from D-erythrose 4-phosphate: step 1/5. Its function is as follows. Catalyzes the NAD-dependent conversion of D-erythrose 4-phosphate to 4-phosphoerythronate. The polypeptide is D-erythrose-4-phosphate dehydrogenase (Pectobacterium atrosepticum (strain SCRI 1043 / ATCC BAA-672) (Erwinia carotovora subsp. atroseptica)).